The following is a 281-amino-acid chain: F-actin-capping protein subunit alpha (281 aa).

It belongs to the F-actin-capping protein alpha subunit family. As to quaternary structure, component of the F-actin capping complex, composed of a heterodimer of an alpha and a beta subunit.

The protein localises to the cytoplasm. The protein resides in the cytoskeleton. Functionally, F-actin-capping proteins bind in a Ca(2+)-independent manner to the fast growing ends of actin filaments (barbed end) thereby blocking the exchange of subunits at these ends. Unlike other capping proteins (such as gelsolin and severin), these proteins do not sever actin filaments. The protein is F-actin-capping protein subunit alpha (acpB) of Dictyostelium discoideum (Social amoeba).